A 92-amino-acid chain; its full sequence is Small ribosomal subunit protein uS19 (92 aa).

The protein belongs to the universal ribosomal protein uS19 family.

Protein S19 forms a complex with S13 that binds strongly to the 16S ribosomal RNA. This Shewanella putrefaciens (strain CN-32 / ATCC BAA-453) protein is Small ribosomal subunit protein uS19.